A 537-amino-acid chain; its full sequence is Putative cysteine ligase BshC (537 aa).

Residues I422–I450 adopt a coiled-coil conformation.

It belongs to the BshC family.

Functionally, involved in bacillithiol (BSH) biosynthesis. May catalyze the last step of the pathway, the addition of cysteine to glucosamine malate (GlcN-Mal) to generate BSH. The sequence is that of Putative cysteine ligase BshC from Staphylococcus aureus (strain MRSA252).